The primary structure comprises 382 residues: S-adenosylmethionine synthase (382 aa).

An ATP-binding site is contributed by H14. D16 serves as a coordination point for Mg(2+). E42 contacts K(+). L-methionine contacts are provided by E55 and Q91. Residues 91–101 (QSENIAMGVNL) are flexible loop. Residues 156–158 (DMK), 222–223 (KF), D231, 237–238 (RK), A254, and K258 contribute to the ATP site. D231 contributes to the L-methionine binding site. K262 serves as a coordination point for L-methionine.

Belongs to the AdoMet synthase family. Homotetramer; dimer of dimers. Requires Mg(2+) as cofactor. K(+) serves as cofactor.

It localises to the cytoplasm. It catalyses the reaction L-methionine + ATP + H2O = S-adenosyl-L-methionine + phosphate + diphosphate. The protein operates within amino-acid biosynthesis; S-adenosyl-L-methionine biosynthesis; S-adenosyl-L-methionine from L-methionine: step 1/1. Catalyzes the formation of S-adenosylmethionine (AdoMet) from methionine and ATP. The overall synthetic reaction is composed of two sequential steps, AdoMet formation and the subsequent tripolyphosphate hydrolysis which occurs prior to release of AdoMet from the enzyme. The polypeptide is S-adenosylmethionine synthase (Mycoplasmopsis synoviae (strain 53) (Mycoplasma synoviae)).